A 976-amino-acid polypeptide reads, in one-letter code: Dolichyl-phosphooligosaccharide-protein glycotransferase 1 (976 aa).

The Cytoplasmic segment spans residues 1–21; sequence MVKSKVKKVEKGKEGEEKRST. Residues 22–42 traverse the membrane as a helical segment; the sequence is YVLLKKVLIPILVFGFAIYAF. Over 43–112 the chain is Extracellular; sequence YLRHLTAGKY…KVVSLFGYNE (70 aa). The DXD motif 1 signature appears at 55–57; it reads DPD. Residue aspartate 57 participates in Mn(2+) binding. A helical transmembrane segment spans residues 113-133; that stretch reads LQAFLLWPPFVGFLGVIAVYL. Residues 134-135 lie on the Cytoplasmic side of the membrane; it reads LG. Residues 136–156 form a helical membrane-spanning segment; sequence RKVLNEWTGLWGAVVLTVSTA. The Extracellular portion of the chain corresponds to 157-165; the sequence is NFSRTFSGN. A helical transmembrane segment spans residues 166 to 186; it reads ARGDGPFMALFIFASVAMLYY. The Mn(2+) site is built by arginine 167 and aspartate 169. The DXD motif 2 motif lies at 167–169; sequence RGD. Residues 187–193 lie on the Cytoplasmic side of the membrane; the sequence is LKESNKT. The chain crosses the membrane as a helical span at residues 194–214; the sequence is RKIIYGTLFVLLTVISLGAWN. Glycine 215 is a topological domain (extracellular). The helical transmembrane segment at 216 to 236 threads the bilayer; the sequence is SPFGLMVLLGFASLQTIILFI. Residues 237-247 lie on the Cytoplasmic side of the membrane; the sequence is FGKLEELKKFV. A helical membrane pass occupies residues 248 to 268; that stretch reads KEFYPAYLAILAFGYALTFPG. A topological domain (extracellular) is located at residue isoleucine 269. Residues 270–290 traverse the membrane as a helical segment; that stretch reads VKIGGFIRFAFEVFLGLIFLL. Residues 291 to 306 are Cytoplasmic-facing; it reads VIMLYGGRYLNYSDKK. The chain crosses the membrane as a helical span at residues 307 to 327; sequence HRFLVVTIIVLLGFGGAYAYV. Residues 328-360 are Extracellular-facing; the sequence is GPKLFRLMGGAYQSTQVYETVQELAKTTIGDVK. The TIXE motif signature appears at 347–350; sequence TVQE. A helical transmembrane segment spans residues 361 to 381; the sequence is AYYGVESGNGLIFFLSIPGLL. Residues 382 to 396 are Cytoplasmic-facing; sequence ILLTKYLYDLFKKAK. A helical transmembrane segment spans residues 397 to 417; the sequence is SDNETLFALVFYTMSLYLLYL. A topological domain (extracellular) is located at residue alanine 418. A helical transmembrane segment spans residues 419–439; it reads VRFLFLASYAVALFFGIFIGF. A glycophospholipid is bound at residue arginine 420. Residues 440-453 are Cytoplasmic-facing; that stretch reads SMDVIEKMKENIGI. Residues 454 to 474 traverse the membrane as a helical segment; sequence KAALGIVLSLMILVIPFVHAP. Over 475 to 976 the chain is Extracellular; sequence VLARSARALK…SASAPHHSSE (502 aa). The segment at 513–515 is interacts with target acceptor peptide in protein substrate; that stretch reads WWD. Positions 513 to 517 match the WWDYG motif motif; it reads WWDYG. Tyrosine 518 contributes to the a glycophospholipid binding site. Positions 573–580 match the DK motif motif; it reads DWAKFNAI.

The protein belongs to the STT3 family. It depends on Mn(2+) as a cofactor. Mg(2+) serves as cofactor.

The protein resides in the cell membrane. It catalyses the reaction an archaeal dolichyl phosphooligosaccharide + [protein]-L-asparagine = an archaeal dolichyl phosphate + a glycoprotein with the oligosaccharide chain attached by N-beta-D-glycosyl linkage to a protein L-asparagine.. It functions in the pathway protein modification; protein glycosylation. In terms of biological role, oligosaccharyl transferase (OST) that catalyzes the initial transfer of a defined glycan (ManNAcXyl(2)GlcAMan(2)GalNAc in Pyrococcus) from the lipid carrier dolichol-monophosphate to an asparagine residue within an Asn-X-Ser/Thr consensus motif in nascent polypeptide chains, the first step in protein N-glycosylation. In Pyrococcus horikoshii (strain ATCC 700860 / DSM 12428 / JCM 9974 / NBRC 100139 / OT-3), this protein is Dolichyl-phosphooligosaccharide-protein glycotransferase 1 (aglB1).